The following is a 379-amino-acid chain: MSCPYAGNGNDHDDSAVPLTTEVGKIYGEYLMLDKLLDAQCMLSEEDKRPVHDEHLFIITHQAYELWFKQIIFEFDSIRDMLDAEVIDETKTLEIVKRLNRVVLILKLLVDQVPILETMTPLDFMDFRKYLAPASGFQSLQFRLIENKLGVLTEQRVRYNQKYSDVFSDEEARNSIRNSEKDPSLLELVQRWLERTPGLEESGFNFWAKFQESVDRFLEAQVQSAMMEPVEKAKNYRLMDIEKRREVYRSIFDPAVHDALVRRGDRRFSHRALQGAIMITFYRDEPRFSQPHQLLTLLMDIDSLITKWRYNHVIMVQRMIGSQQLGTGGSSGYQYLRSTLSDRYKVFLDLFNLSTFLIPREAIPPLDETIRRKLVHKSV.

Substrate-binding positions include F57–H61 and R128. H312 lines the heme pocket. Residue T327 participates in substrate binding.

This sequence belongs to the tryptophan 2,3-dioxygenase family. In terms of assembly, homotetramer. Dimer of dimers. The cofactor is heme.

The enzyme catalyses L-tryptophan + O2 = N-formyl-L-kynurenine. It functions in the pathway amino-acid degradation; L-tryptophan degradation via kynurenine pathway; L-kynurenine from L-tryptophan: step 1/2. The protein operates within pigment biosynthesis; ommochrome biosynthesis. Functionally, heme-dependent dioxygenase that catalyzes the oxidative cleavage of the L-tryptophan (L-Trp) pyrrole ring and converts L-tryptophan to N-formyl-L-kynurenine. Catalyzes the oxidative cleavage of the indole moiety. The polypeptide is Tryptophan 2,3-dioxygenase (Drosophila erecta (Fruit fly)).